We begin with the raw amino-acid sequence, 61 residues long: Large ribosomal subunit protein uL30 (61 aa).

This sequence belongs to the universal ribosomal protein uL30 family. In terms of assembly, part of the 50S ribosomal subunit.

This Lacticaseibacillus casei (strain BL23) (Lactobacillus casei) protein is Large ribosomal subunit protein uL30.